The chain runs to 268 residues: Small ribosomal subunit protein eS1 (268 aa).

Positions 1 to 21 are disordered; the sequence is MAVGKNKGLSKGGKKGGKKKV.

This sequence belongs to the eukaryotic ribosomal protein eS1 family. Component of the small ribosomal subunit. Mature ribosomes consist of a small (40S) and a large (60S) subunit. The 40S subunit contains about 33 different proteins and 1 molecule of RNA (18S). The 60S subunit contains about 49 different proteins and 3 molecules of RNA (28S, 5.8S and 5S).

The protein resides in the cytoplasm. Essential for oogenesis; required for late follicle cell development. In Drosophila mojavensis (Fruit fly), this protein is Small ribosomal subunit protein eS1.